Consider the following 330-residue polypeptide: MVTKWKKICLFDNYEISNTGKIRNSKSGKLLKFSMRKGYYCCSLSKNNTKKTFNVHRLVARIFINNPSKFNVVNHKDGNKLNNNSSNLEWTNYKHNANHAITNGLKKIFRKKIHQYDINGNYIDSFESINNAGLYTGINPKHISSTCLGKRKTCGGFIWEYDKKFSKEKKNGLPLENNNNYLITKDGRVFSKRANKYLKPKIDPDGYLLVSISTNNVNKQISIHRLVAMTYIENPNNYPYVNHIDNNKQNNNITNLEWCTPKQNMIHHIKTRTKIYTVKVAQYDMNYNVITSYASIKEAGEKTGIDKSSIVRVCKGKQKYAGKYIWSYIN.

This is an uncharacterized protein from Acanthamoeba polyphaga (Amoeba).